The sequence spans 119 residues: Ribonuclease P protein component (119 aa).

The disordered stretch occupies residues 1 to 24 (MRGSSRFRPHEKLRASDDYQRVKR). Positions 8 to 21 (RPHEKLRASDDYQR) are enriched in basic and acidic residues.

Belongs to the RnpA family. In terms of assembly, consists of a catalytic RNA component (M1 or rnpB) and a protein subunit.

It catalyses the reaction Endonucleolytic cleavage of RNA, removing 5'-extranucleotides from tRNA precursor.. RNaseP catalyzes the removal of the 5'-leader sequence from pre-tRNA to produce the mature 5'-terminus. It can also cleave other RNA substrates such as 4.5S RNA. The protein component plays an auxiliary but essential role in vivo by binding to the 5'-leader sequence and broadening the substrate specificity of the ribozyme. In Syntrophobacter fumaroxidans (strain DSM 10017 / MPOB), this protein is Ribonuclease P protein component.